A 549-amino-acid chain; its full sequence is Chaperonin GroEL 3 (549 aa).

ATP contacts are provided by residues 29 to 32 (TLGP), 86 to 90 (DGTTT), G414, 477 to 479 (NAA), and D493.

It belongs to the chaperonin (HSP60) family. As to quaternary structure, forms a cylinder of 14 subunits composed of two heptameric rings stacked back-to-back. Interacts with the co-chaperonin GroES.

The protein localises to the cytoplasm. It catalyses the reaction ATP + H2O + a folded polypeptide = ADP + phosphate + an unfolded polypeptide.. Together with its co-chaperonin GroES, plays an essential role in assisting protein folding. The GroEL-GroES system forms a nano-cage that allows encapsulation of the non-native substrate proteins and provides a physical environment optimized to promote and accelerate protein folding. In Frankia casuarinae (strain DSM 45818 / CECT 9043 / HFP020203 / CcI3), this protein is Chaperonin GroEL 3.